A 185-amino-acid chain; its full sequence is Ribosome-recycling factor (185 aa).

It belongs to the RRF family.

It localises to the cytoplasm. In terms of biological role, responsible for the release of ribosomes from messenger RNA at the termination of protein biosynthesis. May increase the efficiency of translation by recycling ribosomes from one round of translation to another. The protein is Ribosome-recycling factor of Pseudomonas entomophila (strain L48).